The primary structure comprises 380 residues: Cytochrome b (380 aa).

A run of 4 helical transmembrane segments spans residues 34 to 54 (FGSL…FLAM), 78 to 99 (WLLR…YFHI), 114 to 134 (WNIG…GYVL), and 179 to 199 (FFTF…IHLL). Positions 84 and 98 each coordinate heme b. His197 provides a ligand contact to heme b. An a ubiquinone-binding site is contributed by His202. Helical transmembrane passes span 227–247 (FKDL…STFA), 289–309 (LGGV…PITH), 321–341 (TAKA…WIGG), and 348–368 (FISI…LIIP).

This sequence belongs to the cytochrome b family. In terms of assembly, the cytochrome bc1 complex contains 3 respiratory subunits (MT-CYB, CYC1 and UQCRFS1), 2 core proteins (UQCRC1 and UQCRC2) and probably 6 low-molecular weight proteins. Heme b is required as a cofactor.

The protein resides in the mitochondrion inner membrane. Its function is as follows. Component of the ubiquinol-cytochrome c reductase complex (complex III or cytochrome b-c1 complex) that is part of the mitochondrial respiratory chain. The b-c1 complex mediates electron transfer from ubiquinol to cytochrome c. Contributes to the generation of a proton gradient across the mitochondrial membrane that is then used for ATP synthesis. In Glandirana rugosa (Japanese wrinkled frog), this protein is Cytochrome b (mt-cyb).